Here is a 218-residue protein sequence, read N- to C-terminus: Cytochrome b6 (218 aa).

The helical transmembrane segment at 35 to 55 (IFYCLGGITLVCFLIQFATGF) threads the bilayer. Position 38 (Cys-38) interacts with heme c. Positions 89 and 103 each coordinate heme b. The next 3 helical transmembrane spans lie at 93–113 (ASMM…TGGF), 119–139 (LTWV…VTGY), and 189–209 (LHTF…FLMI). His-190 and His-205 together coordinate heme b.

This sequence belongs to the cytochrome b family. PetB subfamily. The 4 large subunits of the cytochrome b6-f complex are cytochrome b6, subunit IV (17 kDa polypeptide, PetD), cytochrome f and the Rieske protein, while the 4 small subunits are PetG, PetL, PetM and PetN. The complex functions as a dimer. The cofactor is heme b. It depends on heme c as a cofactor.

It is found in the cellular thylakoid membrane. In terms of biological role, component of the cytochrome b6-f complex, which mediates electron transfer between photosystem II (PSII) and photosystem I (PSI), cyclic electron flow around PSI, and state transitions. The sequence is that of Cytochrome b6 from Synechococcus sp. (strain CC9902).